Reading from the N-terminus, the 243-residue chain is Uridylate kinase (243 aa).

ATP is bound at residue 15–18; the sequence is KMSG. Gly57 contacts UMP. Residues Gly58 and Arg62 each contribute to the ATP site. UMP-binding positions include Asp77 and 138-145; that span reads TGNPLVTT. The ATP site is built by Thr165, Asn166, Tyr171, and Asp174.

This sequence belongs to the UMP kinase family. As to quaternary structure, homohexamer.

Its subcellular location is the cytoplasm. The enzyme catalyses UMP + ATP = UDP + ADP. Its pathway is pyrimidine metabolism; CTP biosynthesis via de novo pathway; UDP from UMP (UMPK route): step 1/1. With respect to regulation, inhibited by UTP. Functionally, catalyzes the reversible phosphorylation of UMP to UDP. This chain is Uridylate kinase, found in Coxiella burnetii (strain RSA 493 / Nine Mile phase I).